Consider the following 398-residue polypeptide: MAIRYIDEIESLKGKKVFIRVDFNVPLDEHQNITEDTRIRAVLPTINFALDAGAKVILASHLGRPKGERKPKYSMAPAAKRLSRLLNKEVQLAPDCIGDEVKKMIDAMKPGEVLLLENVRFYEGEEKNDADFAKALANDCEIYINDAFAVSHRAHASVEAITKFFPVVAAGFLMNNEINYFEKAMQKPIRPLVAILGGAKVSGKLEVLESLVNKVDKIIIGGGMAFTFLKALGYNVGKSLVEEELLEIALTTYTKAREKGVKFYLPVDCVAADRFNPEAETKVTTIQEIPEEWMALDIGPATVTLFTEALQNAKTIIWNGPMGVFEMDAFSRGTFAMVSAVANSYALTIVGGGDTDSAVHRAGEYAKISYISTGGGAFLELLEGKHLPGIKVLEENGK.

Substrate is bound by residues 22–24 (DFN), Arg-38, 61–64 (HLGR), Arg-120, and Arg-153. ATP contacts are provided by residues Lys-204, Glu-326, and 352–355 (GGDT).

This sequence belongs to the phosphoglycerate kinase family. In terms of assembly, monomer.

It localises to the cytoplasm. It carries out the reaction (2R)-3-phosphoglycerate + ATP = (2R)-3-phospho-glyceroyl phosphate + ADP. Its pathway is carbohydrate degradation; glycolysis; pyruvate from D-glyceraldehyde 3-phosphate: step 2/5. This Geobacter metallireducens (strain ATCC 53774 / DSM 7210 / GS-15) protein is Phosphoglycerate kinase.